The following is a 743-amino-acid chain: Neutral ceramidase (743 aa).

Over 1 to 14 (MASKSRRLSGLEIS) the chain is Cytoplasmic. The chain crosses the membrane as a helical; Signal-anchor for type II membrane protein span at residues 15–35 (LIVLFLLMTAVSVALITVLAL). The Lumenal segment spans residues 36–743 (KQESDKKEEV…FKVARSFYYF (708 aa)). Positions 40 to 60 (DKKEEVTPEEPSPSVTPPEKP) are disordered. The span at 49–59 (EPSPSVTPPEK) shows a compositional bias: pro residues. Positions 151 and 260 each coordinate Zn(2+). The N-linked (GlcNAc...) asparagine glycan is linked to N265. The active-site Nucleophile is S312. 2 disulfides stabilise this stretch: C320/C334 and C327/C342. N331, N389, N398, and N451 each carry an N-linked (GlcNAc...) asparagine glycan. Cysteines 406 and 456 form a disulfide. Residues E498 and Y538 each coordinate Zn(2+). N661 is a glycosylation site (N-linked (GlcNAc...) asparagine). Ca(2+) contacts are provided by D672, S674, and T677. The N-linked (GlcNAc...) asparagine glycan is linked to N720.

This sequence belongs to the neutral ceramidase family. Zn(2+) serves as cofactor. In terms of processing, N-glycosylated. O-glycosylated. As to expression, detected in intestine (at protein level).

It is found in the cell membrane. The protein resides in the membrane raft. It localises to the membrane. Its subcellular location is the caveola. The protein localises to the golgi apparatus membrane. It is found in the mitochondrion. The protein resides in the secreted. It localises to the extracellular exosome. It catalyses the reaction an N-acylsphing-4-enine + H2O = sphing-4-enine + a fatty acid. It carries out the reaction N-dodecanoylsphing-4-enine + H2O = dodecanoate + sphing-4-enine. It participates in lipid metabolism; sphingolipid metabolism. Plasma membrane ceramidase that hydrolyzes sphingolipid ceramides into sphingosine and free fatty acids at neutral pH. Ceramides, sphingosine, and its phosphorylated form sphingosine-1-phosphate are bioactive lipids that mediate cellular signaling pathways regulating several biological processes including cell proliferation, apoptosis and differentiation. Also catalyzes the reverse reaction allowing the synthesis of ceramides from fatty acids and sphingosine. Together with sphingomyelinase, participates in the production of sphingosine and sphingosine-1-phosphate from the degradation of sphingomyelin, a sphingolipid enriched in the plasma membrane of cells. Also participates in the hydrolysis of ceramides from the extracellular milieu allowing the production of sphingosine-1-phosphate inside and outside cells. In Danio rerio (Zebrafish), this protein is Neutral ceramidase (asah2).